Reading from the N-terminus, the 315-residue chain is Methionyl-tRNA formyltransferase (315 aa).

(6S)-5,6,7,8-tetrahydrofolate is bound at residue 113–116 (SILP).

The protein belongs to the Fmt family.

It carries out the reaction L-methionyl-tRNA(fMet) + (6R)-10-formyltetrahydrofolate = N-formyl-L-methionyl-tRNA(fMet) + (6S)-5,6,7,8-tetrahydrofolate + H(+). Functionally, attaches a formyl group to the free amino group of methionyl-tRNA(fMet). The formyl group appears to play a dual role in the initiator identity of N-formylmethionyl-tRNA by promoting its recognition by IF2 and preventing the misappropriation of this tRNA by the elongation apparatus. The polypeptide is Methionyl-tRNA formyltransferase (Vibrio parahaemolyticus serotype O3:K6 (strain RIMD 2210633)).